Consider the following 553-residue polypeptide: Dihydroxy-acid dehydratase (553 aa).

Aspartate 78 is a Mg(2+) binding site. Cysteine 119 contacts [2Fe-2S] cluster. Aspartate 120 and lysine 121 together coordinate Mg(2+). Position 121 is an N6-carboxylysine (lysine 121). A [2Fe-2S] cluster-binding site is contributed by cysteine 193. Glutamate 441 provides a ligand contact to Mg(2+). The active-site Proton acceptor is serine 467.

The protein belongs to the IlvD/Edd family. Homodimer. Requires [2Fe-2S] cluster as cofactor. Mg(2+) serves as cofactor.

It catalyses the reaction (2R)-2,3-dihydroxy-3-methylbutanoate = 3-methyl-2-oxobutanoate + H2O. It carries out the reaction (2R,3R)-2,3-dihydroxy-3-methylpentanoate = (S)-3-methyl-2-oxopentanoate + H2O. It participates in amino-acid biosynthesis; L-isoleucine biosynthesis; L-isoleucine from 2-oxobutanoate: step 3/4. It functions in the pathway amino-acid biosynthesis; L-valine biosynthesis; L-valine from pyruvate: step 3/4. Its function is as follows. Functions in the biosynthesis of branched-chain amino acids. Catalyzes the dehydration of (2R,3R)-2,3-dihydroxy-3-methylpentanoate (2,3-dihydroxy-3-methylvalerate) into 2-oxo-3-methylpentanoate (2-oxo-3-methylvalerate) and of (2R)-2,3-dihydroxy-3-methylbutanoate (2,3-dihydroxyisovalerate) into 2-oxo-3-methylbutanoate (2-oxoisovalerate), the penultimate precursor to L-isoleucine and L-valine, respectively. This chain is Dihydroxy-acid dehydratase, found in Geotalea daltonii (strain DSM 22248 / JCM 15807 / FRC-32) (Geobacter daltonii).